We begin with the raw amino-acid sequence, 180 residues long: Large ribosomal subunit protein uL5 (180 aa).

The protein belongs to the universal ribosomal protein uL5 family. As to quaternary structure, part of the 50S ribosomal subunit; part of the 5S rRNA/L5/L18/L25 subcomplex. Contacts the 5S rRNA and the P site tRNA. Forms a bridge to the 30S subunit in the 70S ribosome.

In terms of biological role, this is one of the proteins that bind and probably mediate the attachment of the 5S RNA into the large ribosomal subunit, where it forms part of the central protuberance. In the 70S ribosome it contacts protein S13 of the 30S subunit (bridge B1b), connecting the 2 subunits; this bridge is implicated in subunit movement. Contacts the P site tRNA; the 5S rRNA and some of its associated proteins might help stabilize positioning of ribosome-bound tRNAs. The polypeptide is Large ribosomal subunit protein uL5 (Chlamydia trachomatis serovar L2 (strain ATCC VR-902B / DSM 19102 / 434/Bu)).